The chain runs to 161 residues: Ribonuclease P protein component 2 (161 aa).

This sequence belongs to the eukaryotic/archaeal RNase P protein component 2 family. In terms of assembly, consists of a catalytic RNA component and at least 4-5 protein subunits.

The protein localises to the cytoplasm. The enzyme catalyses Endonucleolytic cleavage of RNA, removing 5'-extranucleotides from tRNA precursor.. Functionally, part of ribonuclease P, a protein complex that generates mature tRNA molecules by cleaving their 5'-ends. The polypeptide is Ribonuclease P protein component 2 (Natronomonas pharaonis (strain ATCC 35678 / DSM 2160 / CIP 103997 / JCM 8858 / NBRC 14720 / NCIMB 2260 / Gabara) (Halobacterium pharaonis)).